The chain runs to 126 residues: Large ribosomal subunit protein uL22 (126 aa).

It belongs to the universal ribosomal protein uL22 family. In terms of assembly, part of the 50S ribosomal subunit.

Its function is as follows. This protein binds specifically to 23S rRNA; its binding is stimulated by other ribosomal proteins, e.g. L4, L17, and L20. It is important during the early stages of 50S assembly. It makes multiple contacts with different domains of the 23S rRNA in the assembled 50S subunit and ribosome. In terms of biological role, the globular domain of the protein is located near the polypeptide exit tunnel on the outside of the subunit, while an extended beta-hairpin is found that lines the wall of the exit tunnel in the center of the 70S ribosome. In Cereibacter sphaeroides (strain ATCC 17029 / ATH 2.4.9) (Rhodobacter sphaeroides), this protein is Large ribosomal subunit protein uL22.